The primary structure comprises 953 residues: Serine-aspartate repeat-containing protein C (953 aa).

The signal sequence occupies residues 1–50 (MNNKKTATNRKGMIPNRLNKFSIRKYSVGTASILVGTTLIFGLSGHEAKA). The tract at residues 51 to 160 (AEHTNGELNQ…AKNVSTTPKT (110 aa)) is disordered. A ligand binding A region region spans residues 51 to 495 (AEHTNGELNQ…GSSTANGDQK (445 aa)). Residues 56-71 (GELNQSKNETTAPSEN) are compositionally biased toward polar residues. Over residues 72-83 (KTTEKVDSRQLK) the composition is skewed to basic and acidic residues. Over residues 84–114 (DNTQTATADQPKVTMSDSATVKETSSNMQSP) the composition is skewed to polar residues. Residues 115-132 (QNATASQSTTQTSNVTTN) show a composition bias toward low complexity. A compositionally biased stretch (polar residues) spans 133–160 (DKSSTTYSNETDKSNLTQAKNVSTTPKT). CNA-B domains lie at 496-606 (KYNL…YKTP) and 607-717 (KYSL…EEET). Residues 678-933 (TQTGTNTTED…NNSNNGTLFG (256 aa)) form a disordered region. 2 stretches are compositionally biased toward acidic residues: residues 685–695 (TEDDKDADGGE) and 712–892 (YYEE…DSDS). Positions 916-920 (LPETG) match the LPXTG sorting signal motif. Residues 918–933 (ETGSENNNSNNGTLFG) are compositionally biased toward low complexity. Threonine 919 is modified (pentaglycyl murein peptidoglycan amidated threonine). The propeptide at 920–953 (GSENNNSNNGTLFGGLFAALGSLLLFGRRKKQNK) is removed by sortase.

Belongs to the serine-aspartate repeat-containing protein (SDr) family. In terms of assembly, homodimerizes; via N2-Domain. Interacts with host NRXN1; this interaction mediates bacterial attachment to host cells.

The protein resides in the secreted. The protein localises to the cell wall. In terms of biological role, cell surface-associated calcium-binding protein which plays an important role in adhesion and pathogenesis. Mediates interactions with components of the extracellular matrix such as host NRXN1 to promote bacterial adhesion. The sequence is that of Serine-aspartate repeat-containing protein C (sdrC) from Staphylococcus aureus (strain Mu50 / ATCC 700699).